The following is a 130-amino-acid chain: Blasticidin-S deaminase (130 aa).

In terms of domain architecture, CMP/dCMP-type deaminase spans methionine 1–arginine 129. Position 28 (serine 28) interacts with substrate. Position 54 (cysteine 54) interacts with Zn(2+). The active-site Proton donor is glutamate 56. Position 82 (arginine 82) interacts with substrate. Residues cysteine 88 and cysteine 91 each contribute to the Zn(2+) site. Residue tyrosine 126 participates in substrate binding.

It belongs to the cytidine and deoxycytidylate deaminase family. As to quaternary structure, homotetramer. Requires Zn(2+) as cofactor.

The catalysed reaction is blasticidin S + H2O + H(+) = deaminohydroxyblasticidin S + NH4(+). Its function is as follows. Catalyzes the deamination of the cytosine moiety of the antibiotics blasticidin S, cytomycin and acetylblasticidin S. The sequence is that of Blasticidin-S deaminase (bsd) from Aspergillus terreus (strain NIH 2624 / FGSC A1156).